The chain runs to 353 residues: Photosystem II protein D1 (353 aa).

Thr2 is modified (N-acetylthreonine). A Phosphothreonine modification is found at Thr2. A run of 3 helical transmembrane segments spans residues 29–46 (YIGW…TATS), 118–133 (HFLL…EWEL), and 142–156 (WIAV…AATA). His118 is a binding site for chlorophyll a. Tyr126 contacts pheophytin a. The [CaMn4O5] cluster site is built by Asp170 and Glu189. Residues 197–218 (FHMLGVAGVFGGSLFSAMHGSL) form a helical membrane-spanning segment. His198 serves as a coordination point for chlorophyll a. Residues His215 and 264–265 (SF) each bind a quinone. Fe cation is bound at residue His215. His272 contributes to the Fe cation binding site. The chain crosses the membrane as a helical span at residues 274–288 (FLAAWPVIGIWFTAL). The [CaMn4O5] cluster site is built by His332, Glu333, Asp342, and Ala344. Residues 345–353 (AVEAPSTNG) constitute a propeptide that is removed on maturation.

It belongs to the reaction center PufL/M/PsbA/D family. In terms of assembly, PSII is composed of 1 copy each of membrane proteins PsbA, PsbB, PsbC, PsbD, PsbE, PsbF, PsbH, PsbI, PsbJ, PsbK, PsbL, PsbM, PsbT, PsbX, PsbY, PsbZ, Psb30/Ycf12, at least 3 peripheral proteins of the oxygen-evolving complex and a large number of cofactors. It forms dimeric complexes. It depends on The D1/D2 heterodimer binds P680, chlorophylls that are the primary electron donor of PSII, and subsequent electron acceptors. It shares a non-heme iron and each subunit binds pheophytin, quinone, additional chlorophylls, carotenoids and lipids. D1 provides most of the ligands for the Mn4-Ca-O5 cluster of the oxygen-evolving complex (OEC). There is also a Cl(-1) ion associated with D1 and D2, which is required for oxygen evolution. The PSII complex binds additional chlorophylls, carotenoids and specific lipids. as a cofactor. Post-translationally, tyr-161 forms a radical intermediate that is referred to as redox-active TyrZ, YZ or Y-Z. C-terminally processed by CTPA; processing is essential to allow assembly of the oxygen-evolving complex and thus photosynthetic growth.

It localises to the plastid. It is found in the chloroplast thylakoid membrane. It catalyses the reaction 2 a plastoquinone + 4 hnu + 2 H2O = 2 a plastoquinol + O2. Photosystem II (PSII) is a light-driven water:plastoquinone oxidoreductase that uses light energy to abstract electrons from H(2)O, generating O(2) and a proton gradient subsequently used for ATP formation. It consists of a core antenna complex that captures photons, and an electron transfer chain that converts photonic excitation into a charge separation. The D1/D2 (PsbA/PsbD) reaction center heterodimer binds P680, the primary electron donor of PSII as well as several subsequent electron acceptors. This Buxus microphylla (Littleleaf boxwood) protein is Photosystem II protein D1.